A 699-amino-acid chain; its full sequence is Chitinase A1 (699 aa).

Residues 1–41 (MINLNKHTAFKKTAKFFLGLSLLLSVIVPSFALQPATAEAA) form the signal peptide. The GH18 domain occupies 44–454 (YKIVGYYPSW…NKLKADLPTG (411 aa)). Chitin contacts are provided by residues 135–136 (DQ) and 162–165 (GGWT). The Proton donor role is filled by E204. Chitin is bound by residues Y205, 277 to 280 (MTYD), and W433. Residues 449–471 (ADLPTGGTVPPVDTTAPSVPGNA) form a disordered region. Over residues 452 to 465 (PTGGTVPPVDTTAP) the composition is skewed to low complexity. 2 consecutive Fibronectin type-III domains span residues 467–553 (VPGN…TAQP) and 562–647 (APTN…TAAE).

It belongs to the glycosyl hydrolase 18 family. Chitinase class II subfamily.

It carries out the reaction Random endo-hydrolysis of N-acetyl-beta-D-glucosaminide (1-&gt;4)-beta-linkages in chitin and chitodextrins.. The protein is Chitinase A1 (chiA1) of Niallia circulans (Bacillus circulans).